We begin with the raw amino-acid sequence, 420 residues long: Gamma-glutamyl phosphate reductase (420 aa).

It belongs to the gamma-glutamyl phosphate reductase family.

It localises to the cytoplasm. It carries out the reaction L-glutamate 5-semialdehyde + phosphate + NADP(+) = L-glutamyl 5-phosphate + NADPH + H(+). It participates in amino-acid biosynthesis; L-proline biosynthesis; L-glutamate 5-semialdehyde from L-glutamate: step 2/2. Functionally, catalyzes the NADPH-dependent reduction of L-glutamate 5-phosphate into L-glutamate 5-semialdehyde and phosphate. The product spontaneously undergoes cyclization to form 1-pyrroline-5-carboxylate. The sequence is that of Gamma-glutamyl phosphate reductase from Streptococcus pneumoniae serotype 4 (strain ATCC BAA-334 / TIGR4).